A 241-amino-acid chain; its full sequence is Glutathione S-transferase theta-3 (241 aa).

In terms of domain architecture, GST N-terminal spans 2 to 82 (GLELYLDLMS…YLSRKYKAPD (81 aa)). Glutathione is bound by residues 53–54 (KV) and 66–67 (ES). One can recognise a GST C-terminal domain in the interval 88 to 222 (DLQTRARVDE…VVLKAKDMPP (135 aa)).

The protein belongs to the GST superfamily. Theta family. Homodimer. Expressed strongly in liver, and at lower levels in kidney and testis.

The protein localises to the cytoplasm. The enzyme catalyses RX + glutathione = an S-substituted glutathione + a halide anion + H(+). Conjugation of reduced glutathione to a wide number of exogenous and endogenous hydrophobic electrophiles. Shows high activity towards 4-nitrobenzyl chloride (4-NBC). Also has lower activity towards 1,2-epoxy-3-(p-nitrophenoxy)propane (EPNP), cumene hydroperoxide, 1-chloro-2,4-dinitrobenzene (CDNB), 7-chloro-4-nitrobenzo-2-oxa-1,3-diazole (NBD-Cl), and ethacrynic acid. This Mus musculus (Mouse) protein is Glutathione S-transferase theta-3.